The primary structure comprises 178 residues: Ribosome maturation factor RimM (178 aa).

In terms of domain architecture, PRC barrel spans 94 to 174 (KNEFFWFDLI…RIDVINSFDI (81 aa)).

Belongs to the RimM family. In terms of assembly, binds ribosomal protein uS19.

Its subcellular location is the cytoplasm. An accessory protein needed during the final step in the assembly of 30S ribosomal subunit, possibly for assembly of the head region. Essential for efficient processing of 16S rRNA. May be needed both before and after RbfA during the maturation of 16S rRNA. It has affinity for free ribosomal 30S subunits but not for 70S ribosomes. The protein is Ribosome maturation factor RimM of Aliarcobacter butzleri (strain RM4018) (Arcobacter butzleri).